A 234-amino-acid chain; its full sequence is Transcriptional regulatory protein WalR (234 aa).

In terms of domain architecture, Response regulatory spans 3 to 116 (KILIVDDEKP…ELQARVKALL (114 aa)). The residue at position 52 (Asp52) is a 4-aspartylphosphate. A DNA-binding region (ompR/PhoB-type) is located at residues 133 to 232 (PQPIQIGDLE…RRGVGYYMRN (100 aa)).

Monomer. Homodimer. In terms of processing, phosphorylated by WalK; can also be dephosphorylated by WalK.

Its subcellular location is the cytoplasm. In terms of biological role, member of the two-component regulatory system WalK/WalR that regulates genes involved in cell wall metabolism. Binds to the promoter region of the transcription factor fabT gene in the fabTH-acp operon in vitro. Inhibits transcription of fabT, probably acting in an unphosphorylated form, thereby playing a role in the regulation of fatty acid biosynthesis. Essential for normal growth in vitro. Required for maintaining normal cellular morphology, acting, at least in part, by regulating peptidoglycan hydrolase pcsB. Involved in maintaining expression of WalRK regulon genes in exponentially growing cells. This chain is Transcriptional regulatory protein WalR, found in Streptococcus pneumoniae serotype 2 (strain D39 / NCTC 7466).